Consider the following 172-residue polypeptide: Protein-export protein SecB (172 aa).

This sequence belongs to the SecB family. Homotetramer, a dimer of dimers. One homotetramer interacts with 1 SecA dimer.

Its subcellular location is the cytoplasm. Functionally, one of the proteins required for the normal export of preproteins out of the cell cytoplasm. It is a molecular chaperone that binds to a subset of precursor proteins, maintaining them in a translocation-competent state. It also specifically binds to its receptor SecA. The chain is Protein-export protein SecB from Xylella fastidiosa (strain 9a5c).